Consider the following 709-residue polypeptide: Ribosomal RNA large subunit methyltransferase K/L (709 aa).

Residues 43 to 154 form the THUMP domain; it reads LAYRITLWTR…NGVITIAMNF (112 aa).

It belongs to the methyltransferase superfamily. RlmKL family.

The protein localises to the cytoplasm. The enzyme catalyses guanosine(2445) in 23S rRNA + S-adenosyl-L-methionine = N(2)-methylguanosine(2445) in 23S rRNA + S-adenosyl-L-homocysteine + H(+). It carries out the reaction guanosine(2069) in 23S rRNA + S-adenosyl-L-methionine = N(2)-methylguanosine(2069) in 23S rRNA + S-adenosyl-L-homocysteine + H(+). Its function is as follows. Specifically methylates the guanine in position 2445 (m2G2445) and the guanine in position 2069 (m7G2069) of 23S rRNA. The sequence is that of Ribosomal RNA large subunit methyltransferase K/L from Shewanella sp. (strain W3-18-1).